The following is a 1631-amino-acid chain: Ras GTPase-activating-like protein IQGAP3 (1631 aa).

Residues 34–149 form the Calponin-homology (CH) domain; sequence LCRLEEAKRW…YCIHALSLFL (116 aa). A Phosphotyrosine modification is found at Tyr162. A Phosphoserine modification is found at Ser539. 4 consecutive IQ domains span residues 730 to 759, 760 to 789, 790 to 819, and 820 to 849; these read NVGF…FLRT, WLPA…YFKA, NLDA…YFQK, and NVNS…APHP. The region spanning 1004–1253 is the Ras-GAP domain; the sequence is YLLLQLFKTA…LKFRKFIHRA (250 aa). The residue at position 1424 (Ser1424) is a Phosphoserine.

In Homo sapiens (Human), this protein is Ras GTPase-activating-like protein IQGAP3 (IQGAP3).